The sequence spans 246 residues: Probable transcriptional regulatory protein Dole_0371 (246 aa).

This sequence belongs to the TACO1 family.

Its subcellular location is the cytoplasm. This is Probable transcriptional regulatory protein Dole_0371 from Desulfosudis oleivorans (strain DSM 6200 / JCM 39069 / Hxd3) (Desulfococcus oleovorans).